The sequence spans 466 residues: Glutamate--tRNA ligase 1 (466 aa).

A 'HIGH' region motif is present at residues Pro-9–Gly-19. The 'KMSKS' region motif lies at Lys-238–Arg-242. Lys-241 is an ATP binding site.

Belongs to the class-I aminoacyl-tRNA synthetase family. Glutamate--tRNA ligase type 1 subfamily. In terms of assembly, monomer.

It localises to the cytoplasm. The enzyme catalyses tRNA(Glu) + L-glutamate + ATP = L-glutamyl-tRNA(Glu) + AMP + diphosphate. In terms of biological role, catalyzes the attachment of glutamate to tRNA(Glu) in a two-step reaction: glutamate is first activated by ATP to form Glu-AMP and then transferred to the acceptor end of tRNA(Glu). This is Glutamate--tRNA ligase 1 from Acidiphilium cryptum (strain JF-5).